Here is a 313-residue protein sequence, read N- to C-terminus: Bifunctional pinoresinol-lariciresinol reductase 1 (313 aa).

NADP(+) contacts are provided by residues 11–17, Arg36, and Lys45; that span reads GGTGYIG. Lys138 acts as the Proton acceptor in catalysis. Position 142 (Arg142) interacts with NADP(+). Substrate is bound at residue His271.

The protein belongs to the NmrA-type oxidoreductase family. Isoflavone reductase subfamily. Dimer.

The enzyme catalyses (+)-lariciresinol + NADP(+) = (+)-pinoresinol + NADPH + H(+). It catalyses the reaction (-)-lariciresinol + NADP(+) = (-)-pinoresinol + NADPH + H(+). The catalysed reaction is (+)-secoisolariciresinol + NADP(+) = (-)-lariciresinol + NADPH + H(+). In terms of biological role, reductase involved in lignan biosynthesis. Catalyzes the enantioselective sequential conversion of (-)-pinoresinol into (-)-lariciresinol and of (-)-lariciresinol into (+)-secoisolariciresinol. Can also convert with a lower efficiency (+)-pinoresinol into (+)-lariciresinol, but not (+)-lariciresinol into (-)-secoisolariciresinol. Abstracts the 4R-hydride from the NADPH cofactor during catalysis. The sequence is that of Bifunctional pinoresinol-lariciresinol reductase 1 (PLR_Tp1) from Thuja plicata (Western red-cedar).